A 431-amino-acid chain; its full sequence is Protein translocase subunit SecY 1 (431 aa).

Transmembrane regions (helical) follow at residues 18–38 (IYFTLFILLLYRIGANITVPG), 67–87 (YSIFSLGVSPYITAQIVIQLL), 115–135 (YLTLVVAFVQSIGITLGFNAL), 150–170 (VEIAIIMTAGTMLLTWLGDEI), 178–198 (GVSVIIFAGIIARLPSGLYQI), 215–235 (ILFFIAVIVAILIVTQLVTWV), 268–288 (VIPVIFASSFIVTPATILMAF), 312–332 (GVIIYTLLIILFTFFYAFVQV), 365–385 (LIKLSTVGSIFLGLVALLPQL), and 392–412 (LPSSIGLGGTSLLIVIGVVLE).

It belongs to the SecY/SEC61-alpha family. Component of the Sec protein translocase complex. Heterotrimer consisting of SecY, SecE and SecG subunits. The heterotrimers can form oligomers, although 1 heterotrimer is thought to be able to translocate proteins. Interacts with the ribosome. Interacts with SecDF, and other proteins may be involved. Interacts with SecA.

The protein resides in the cell membrane. In terms of biological role, the central subunit of the protein translocation channel SecYEG. Consists of two halves formed by TMs 1-5 and 6-10. These two domains form a lateral gate at the front which open onto the bilayer between TMs 2 and 7, and are clamped together by SecE at the back. The channel is closed by both a pore ring composed of hydrophobic SecY resides and a short helix (helix 2A) on the extracellular side of the membrane which forms a plug. The plug probably moves laterally to allow the channel to open. The ring and the pore may move independently. The polypeptide is Protein translocase subunit SecY 1 (Lactobacillus kefiranofaciens subsp. kefiranofaciens).